We begin with the raw amino-acid sequence, 1038 residues long: MGTENQGYPNFPARPASSPFASAPPPGIPPQSGGPPTGSEAVGFRPFTPSASQPTRPFTASGPPPAPPVGTMRPGQPSPFVSQIPGSRPPPPSSNSFPSPAYGPPGGAPFQRFPSPPFPTTQNPPQGPPPPQTLAGHLSPPMSLRPQQPMAPVAMGPPPQSTTSGLPGANAYPPATDYHMPARPGFQQSMPPVTPSYPGVGGSQPSFPGYPSKQVLQAPTPFQTSQGPPGPPPVSSYPPHTGGFAQRPNMAAQQNLHPNYAPPPSNVQGLTEDFNSLSLSSIPGSLEPGLDHKSFPRPLDGDVEPNSFAEMYPMNCHSRYLRLTTSAIPNSQSLASRWHLPLGAVVCPLAETPEGEEVPLIDFGSTGIIRCRRCRTYVNPFVTFTDSGRKWRCNICSMLNDVPGEYFSHLDATGRRMDMDQRPELTKGSVEIIAPTEYMVRPPMPPIYFFLIDVSISATKSGMLEVVAQTIKSCLDNLPGYPRTQIGFITYDSTLHFYNMKSSLSQPQMMVVSDLDDIFVPLPDDLLVNLSESRTVVDAFLDSLPLMFQDNFNVESAFGPALRAAFMVMNQLGGKLLIFQNSLPSLGAGRLKLRGDDPRVYGTDKEYALRVAEDPFYKQMAADCTKFQIGINVYAFSDKYTDIASLGTLAKYTGGQVYYYPGFQSSVHGDKLRHELARDLTRETAWEAVMRIRCGKGIRFSSYHGNFMLRSTDLLALPAVDCDKAYAMQLSLEETLLTSQTVYFQVALLYTASCGERRIRVHTSVAPVVTDLGEMYRQADTGSIVSLYARLAIEKSLSAKLDDARNAIQQKIVKALKEYRNLHAVQHRLGSRLVYPESLKFLPLYGLAITKSTPLLGGPADTSLDERCAAGFTMMALPVKKLLKLLYPNLFRVDEWLLKPSAAHDDFKDVLRRLPLAAESLDSRGLYIYDDGFRLVLWFGRMLSPDIAKNLLGVDFAADLSRVTFQEQENGMSKKLMRLVKKLRESDPSYHPMCFLVRQGEQPREGFLLLRNLIEDQMGGSSGYVDWILQLHRQVQQN.

The interval 1–247 (MGTENQGYPN…PPHTGGFAQR (247 aa)) is disordered. Pro residues predominate over residues 22-33 (SAPPPGIPPQSG). Residues cysteine 371, cysteine 374, cysteine 393, and cysteine 396 each contribute to the Zn(2+) site. Residues 371-396 (CRRCRTYVNPFVTFTDSGRKWRCNIC) form a zinc finger-like region.

The protein belongs to the SEC23/SEC24 family. SEC24 subfamily. In terms of assembly, component of the coat protein complex II (COPII), composed of at least five proteins: the Sec23/24 complex, the Sec13/31 complex and Sar1. Interacts with SEC221, SEC23E/SEC23A, SEC23B, SEC23G/SEC23C and SEC23F/SEC23D. (Microbial infection) Interacts with turnip mosaic virus (TuMV) 6K2 in COPII-coated vesicles. As to expression, mainly expressed in pollen, leaves, inflorescences, roots and stems, and, to a lower extent, in cotyledons, petioles and hypocotyls.

The protein localises to the cytoplasmic vesicle. Its subcellular location is the COPII-coated vesicle membrane. It localises to the endoplasmic reticulum membrane. The protein resides in the golgi apparatus membrane. It is found in the cytoplasm. The protein localises to the cytosol. In terms of biological role, essential protein. Component of the coat protein complex II (COPII), that covers ER-derived vesicles involved in transport from the endoplasmic reticulum to the Golgi apparatus. COPII is composed of at least five proteins: the SEC23/24 complex, the SEC13/31 complex, and the protein SAR1. Acts in the cytoplasm to promote the transport of secretory, plasma membrane, and vacuolar proteins from the endoplasmic reticulum to the Golgi complex. Involved in maintaining the dynamic identity of organelles of the early secretory pathway. Regulates cell size patterning, and prevents CDKA;1-, DEK1- and ACR4-dependent endoreduplication and giant cells formation in sepals. Required for male gametophytes (pollen grains) development and transmission. (Microbial infection) Contributes to viral systemic infection of turnip mosaic virus (TuMV) by triggering the formation of host endoplasmic reticulum (ER)-derived viral vesicles that carry the viral RNA (vRNA) to plasmodesmata for cell-to-cell viral movement. The protein is Protein transport protein SEC24 A of Arabidopsis thaliana (Mouse-ear cress).